The primary structure comprises 147 residues: Hordoindoline-B1 (147 aa).

A signal peptide spans 1–19 (MKTLFLLAILALVASTTFA). A propeptide spanning residues 20 to 28 (QYSVGGGYN) is cleaved from the precursor.

Five disulfide bonds are present. In terms of tissue distribution, found in endosperm and aleurone layer of developing kernels, but not in the embryo.

It localises to the membrane. The protein resides in the secreted. The protein localises to the extracellular space. In terms of biological role, acts as a membranotoxin, probably through its antibacterial and antifungal activities, contributing to the defense mechanism of the plant against predators. Forms monovalent cation-selective ion channels in membranes. Contributes to grain texture and hardness. The protein is Hordoindoline-B1 (HINB-1) of Hordeum vulgare (Barley).